We begin with the raw amino-acid sequence, 309 residues long: Dihydroorotate dehydrogenase B (NAD(+)), catalytic subunit (309 aa).

FMN-binding positions include S21 and 45-46 (KA). Substrate is bound by residues K45 and 69–73 (NAIGL). The FMN site is built by N99 and N127. Position 127 (N127) interacts with substrate. Residue C130 is the Nucleophile of the active site. Residues K165 and I191 each contribute to the FMN site. 192–193 (NT) serves as a coordination point for substrate. Residues G217, 243-244 (GG), and 265-266 (GT) contribute to the FMN site.

The protein belongs to the dihydroorotate dehydrogenase family. Type 1 subfamily. In terms of assembly, heterotetramer of 2 PyrK and 2 PyrD type B subunits. FMN serves as cofactor.

The protein localises to the cytoplasm. It carries out the reaction (S)-dihydroorotate + NAD(+) = orotate + NADH + H(+). The protein operates within pyrimidine metabolism; UMP biosynthesis via de novo pathway; orotate from (S)-dihydroorotate (NAD(+) route): step 1/1. Its function is as follows. Catalyzes the conversion of dihydroorotate to orotate with NAD(+) as electron acceptor. This is Dihydroorotate dehydrogenase B (NAD(+)), catalytic subunit (pyrD) from Bacillus cereus (strain B4264).